Here is a 254-residue protein sequence, read N- to C-terminus: SLA class II histocompatibility antigen, DQ haplotype C alpha chain (254 aa).

Positions 1 to 23 (MVPGRVLMWGALALTTVMSACGG) are cleaved as a signal peptide. Positions 24–120 (EDIAADHVAS…KVPEVTVFSK (97 aa)) are alpha-1. Residues 24-216 (EDIAADHVAS…IPAPMSELTE (193 aa)) are Extracellular-facing. N104 and N144 each carry an N-linked (GlcNAc...) asparagine glycan. Positions 113 to 204 (PEVTVFSKSP…LDKPLLKHWE (92 aa)) constitute an Ig-like C1-type domain. The alpha-2 stretch occupies residues 121–203 (SPVILGQPNT…GLDKPLLKHW (83 aa)). An intrachain disulfide couples C133 to C188. The segment at 204–216 (EPEIPAPMSELTE) is connecting peptide. The helical transmembrane segment at 217–239 (TVVCALGLIVGLVGIVVGTVFII) threads the bilayer. Over 240-254 (QGLRSGGPSRHQGSL) the chain is Cytoplasmic.

It belongs to the MHC class II family.

It is found in the membrane. The sequence is that of SLA class II histocompatibility antigen, DQ haplotype C alpha chain from Sus scrofa (Pig).